We begin with the raw amino-acid sequence, 101 residues long: DET1- and DDB1-associated protein 1 (101 aa).

Residues 67 to 101 are disordered; sequence NAAKKRDQDQLEIGETSAPPRKIARTDSQEMSEDT.

It belongs to the DDA1 family. As to quaternary structure, component of numerous DCX (DDB1-CUL4-X-box) E3 ubiquitin-protein ligase complexes which consist of a core of DDB1, cullin-4 (CUL4A or CUL4B), DDA1 and RBX1.

It participates in protein modification; protein ubiquitination. Its function is as follows. Functions as a component of numerous distinct DCX (DDB1-CUL4-X-box) E3 ubiquitin-protein ligase complexes which mediate the ubiquitination and subsequent proteasomal degradation of target proteins. In the DCX complexes, acts as a scaffolding subunit required to stabilize the complex. This Xenopus tropicalis (Western clawed frog) protein is DET1- and DDB1-associated protein 1.